A 347-amino-acid polypeptide reads, in one-letter code: Gentisate 1,2 dioxygenase 1 (347 aa).

One can recognise a Cupin type-2 domain in the interval 96–163 (LQLILPGEVA…DSDKPMIWMD (68 aa)).

Belongs to the gentisate 1,2-dioxygenase family. In terms of assembly, homotetramer. It depends on Fe(2+) as a cofactor.

The enzyme catalyses 2,5-dihydroxybenzoate + O2 = 3-maleylpyruvate + H(+). Its activity is regulated as follows. Completely inhibited by the presence of 5 mM Cu(2+). Partially inhibited with 5 mM Mn(2+), Zn(2+) or EDTA. In terms of biological role, involved in the degradation of gentisate. Catalyzes the conversion of gentisate (2,5-dihydroxybenzoate) to maleylpyruvate. Exhibits broad substrate specificities towards alkyl and halogenated gentisates. The sequence is that of Gentisate 1,2 dioxygenase 1 from Aquipseudomonas alcaligenes (Pseudomonas alcaligenes).